We begin with the raw amino-acid sequence, 228 residues long: 7-cyano-7-deazaguanine synthase (228 aa).

10–20 (FSGGQDSTTLA) contacts ATP. Residues C190, C205, C208, and C211 each contribute to the Zn(2+) site.

This sequence belongs to the QueC family. Zn(2+) serves as cofactor.

The enzyme catalyses 7-carboxy-7-deazaguanine + NH4(+) + ATP = 7-cyano-7-deazaguanine + ADP + phosphate + H2O + H(+). Its pathway is purine metabolism; 7-cyano-7-deazaguanine biosynthesis. Functionally, catalyzes the ATP-dependent conversion of 7-carboxy-7-deazaguanine (CDG) to 7-cyano-7-deazaguanine (preQ(0)). The sequence is that of 7-cyano-7-deazaguanine synthase from Helicobacter pylori (strain P12).